The following is a 99-amino-acid chain: Plastocyanin (99 aa).

One can recognise a Plastocyanin-like domain in the interval 1–99; the sequence is IEIKLGGDDG…AGMVGKVTVQ (99 aa). Positions 37, 84, 87, and 92 each coordinate Cu cation.

It belongs to the plastocyanin family. It depends on Cu(2+) as a cofactor.

It is found in the plastid. It localises to the chloroplast thylakoid membrane. Its function is as follows. Participates in electron transfer between P700 and the cytochrome b6-f complex in photosystem I. The protein is Plastocyanin (PETE) of Rumex obtusifolius (Bitter dock).